We begin with the raw amino-acid sequence, 694 residues long: MAREYKIEDYRNFGIMAHIDAGKTTMTERILFYTGKNHKIGETHDGASTMDWMEQEQERGITITSAATTTFWQGRDGKKRRFNIIDTPGHVDFTIEVERSLRVLDGAIALLDANAGVEPQTETVWRQAEKYHVPRMVFVNKMDKIGADFYRSVEMVGSRLGAVALPVQLPIGAENDFVGVVDLIEMKALTWDGTIGAPATVGEIPADMADKAEEYREKLIELAVEIDEAAMEAYLEGTMPTNDELRALIRKGTIEVKFHPILCGTAFKNRGVQPLLDAVVEFLPAPTDVPAIKGIDVKTETETTRESSDEAPLSMLAFKIMNDPFVGSLTFARIYSGKLTKGVSLENTVKGKRERIGRMLQMHSNSREDIDEAFAGDIVALAGLKETTTGDTLCDPLKPVILERMEFPDPVIEIAIEPKTKADQEKMGIALNRLAAEDPSFRVKSDEESGQTIIAGMGELHLDILVDRMKREFKVEANVGAPQVAYRESITRAAEIDYTHKKQSGGSGQFARVKIIFEPHDGDDFIFESKIVGGSVPKEYIPGVQKGIESVMGAGPLAGFPMLGVKATLIDGAYHDVDSSVLAFEIASRAAFREGAQKAGAQLLEPIMKVEVVTPEDYVGDVIGDLNSRRGQISGTEGRGIATVVNAMVPLANMFGYVNSLRSMSQGRAQYTMQFDHYEPVPTAVAQEIQKKFA.

Positions glutamate 8–threonine 287 constitute a tr-type G domain. GTP contacts are provided by residues alanine 17–threonine 24, aspartate 86–histidine 90, and asparagine 140–aspartate 143.

It belongs to the TRAFAC class translation factor GTPase superfamily. Classic translation factor GTPase family. EF-G/EF-2 subfamily.

The protein resides in the cytoplasm. Catalyzes the GTP-dependent ribosomal translocation step during translation elongation. During this step, the ribosome changes from the pre-translocational (PRE) to the post-translocational (POST) state as the newly formed A-site-bound peptidyl-tRNA and P-site-bound deacylated tRNA move to the P and E sites, respectively. Catalyzes the coordinated movement of the two tRNA molecules, the mRNA and conformational changes in the ribosome. The sequence is that of Elongation factor G from Brucella ovis (strain ATCC 25840 / 63/290 / NCTC 10512).